Consider the following 221-residue polypeptide: Oxaloacetate tautomerase FAHD1, mitochondrial (221 aa).

The N-terminal 24 residues, 1–24 (MASTKPLSRFWEWGKNIVCVGRNY), are a transit peptide targeting the mitochondrion. Arg22 provides a ligand contact to oxalate. Ser37 is subject to Phosphoserine. Mg(2+) contacts are provided by Glu68, Glu70, and Asp99. Lys110 carries the post-translational modification N6-acetyllysine. Position 112 is an N6-succinyllysine (Lys112). Lys120 contacts oxalate.

This sequence belongs to the FAH family. As to quaternary structure, homodimer. Mg(2+) serves as cofactor. The cofactor is Mn(2+). As to expression, ubiquitous with higher expression in the liver and the kidney (at protein level).

Its subcellular location is the mitochondrion. The protein localises to the cytoplasm. It is found in the cytosol. It carries out the reaction oxaloacetate = enol-oxaloacetate. The enzyme catalyses oxaloacetate + H(+) = pyruvate + CO2. It catalyses the reaction a 3-acylpyruvate + H2O = a carboxylate + pyruvate + H(+). The catalysed reaction is acetylpyruvate + H2O = acetate + pyruvate + H(+). It carries out the reaction 3-fumarylpyruvate + H2O = fumarate + pyruvate + H(+). Oxaloacetate decarboxylation is potently and competitively inhibited by oxalate. Tautomerase that converts enol-oxaloacetate, a strong inhibitor of succinate dehydrogenase, to the physiological keto form of oxaloacetate. It is thereby required to maximize aerobic respiration efficiency by preventing succinate dehydrogenase inhibition. Also acts as a weak oxaloacetate decarboxylase (ODx), catalyzing the decarboxylation of oxaloacetate (OAA) to pyruvate and CO(2), and as such is likely a regulatory enzyme in the TCA cycle. Also displays acylpyruvase activity, being able to hydrolyze acetylpyruvate and fumarylpyruvate in vitro. This chain is Oxaloacetate tautomerase FAHD1, mitochondrial, found in Mus musculus (Mouse).